The chain runs to 249 residues: 14-3-3-like protein D (249 aa).

It belongs to the 14-3-3 family.

The sequence is that of 14-3-3-like protein D from Nicotiana tabacum (Common tobacco).